A 318-amino-acid polypeptide reads, in one-letter code: Taste receptor type 2 member 60 (318 aa).

The Extracellular portion of the chain corresponds to 1-7 (MNGDHMV). The helical transmembrane segment at 8 to 28 (LGSSVTDKKAIILVTILLLLR) threads the bilayer. Residues 29 to 40 (LVAIAGNGFIIA) are Cytoplasmic-facing. A helical membrane pass occupies residues 41–61 (ALGVEWVLRRMLLPCDXLLVS). The Extracellular portion of the chain corresponds to 62-88 (LGASRFCLQSVVMGKTIYVFLHPMAFP). The chain crosses the membrane as a helical span at residues 89 to 109 (YNPVLQFLAFQWDFLNAATLW). Topologically, residues 110–128 (FSTWLSVFYCVKIAAFTHP) are cytoplasmic. A helical membrane pass occupies residues 129–149 (VFLWLKHKLSGWLPWILFSSV). At 150–183 (GLSSFTTILFFIGNHRMYQNYLRNHLQPWNITGN) the chain is on the extracellular side. N-linked (GlcNAc...) asparagine glycosylation occurs at Asn179. Residues 184–204 (SIRSYCEKFYLFPLKMITWTM) form a helical membrane-spanning segment. At 205–234 (PTAVFFICMILLITSLGRHMKKALLTTSGF) the chain is on the cytoplasmic side. The chain crosses the membrane as a helical span at residues 235–255 (REPSMQAHIKALLALLSFAML). The Extracellular portion of the chain corresponds to 256-264 (FISYFLSLV). The helical transmembrane segment at 265 to 285 (FSAAGIFPPLDFKFWVWESVI) threads the bilayer. Residues 286 to 318 (YLCAAVHPIILLFSNCRLRAVLKSCRSSRCGTP) are Cytoplasmic-facing.

It belongs to the G-protein coupled receptor T2R family.

It is found in the membrane. Receptor that may play a role in the perception of bitterness and is gustducin-linked. May play a role in sensing the chemical composition of the gastrointestinal content. The activity of this receptor may stimulate alpha gustducin, mediate PLC-beta-2 activation and lead to the gating of TRPM5. This Gorilla gorilla gorilla (Western lowland gorilla) protein is Taste receptor type 2 member 60 (TAS2R60).